The following is a 315-amino-acid chain: Small ribosomal subunit biogenesis GTPase RsgA (315 aa).

One can recognise a CP-type G domain in the interval 80-241 (LSKQTHIIAS…IIDTPGIKGF (162 aa)). Residues 129 to 132 (NKVD) and 183 to 191 (GHSGTGKST) each bind GTP. Zn(2+) contacts are provided by C265, C270, H272, and C278.

It belongs to the TRAFAC class YlqF/YawG GTPase family. RsgA subfamily. In terms of assembly, monomer. Associates with 30S ribosomal subunit, binds 16S rRNA. The cofactor is Zn(2+).

The protein resides in the cytoplasm. In terms of biological role, one of several proteins that assist in the late maturation steps of the functional core of the 30S ribosomal subunit. Helps release RbfA from mature subunits. May play a role in the assembly of ribosomal proteins into the subunit. Circularly permuted GTPase that catalyzes slow GTP hydrolysis, GTPase activity is stimulated by the 30S ribosomal subunit. The protein is Small ribosomal subunit biogenesis GTPase RsgA of Christiangramia forsetii (strain DSM 17595 / CGMCC 1.15422 / KT0803) (Gramella forsetii).